We begin with the raw amino-acid sequence, 455 residues long: tRNA-2-methylthio-N(6)-dimethylallyladenosine synthase (455 aa).

The MTTase N-terminal domain maps to 18–136 (KLFFIQTYGC…FPEYLNRVKT (119 aa)). The [4Fe-4S] cluster site is built by cysteine 27, cysteine 63, cysteine 97, cysteine 173, cysteine 177, and cysteine 180. Residues 159 to 389 (RKSDIKGFVT…VEIVNTGIAK (231 aa)) form the Radical SAM core domain. One can recognise a TRAM domain in the interval 392 to 455 (KDAEGKIYEV…SFSLIGEVEK (64 aa)).

This sequence belongs to the methylthiotransferase family. MiaB subfamily. In terms of assembly, monomer. The cofactor is [4Fe-4S] cluster.

The protein localises to the cytoplasm. The enzyme catalyses N(6)-dimethylallyladenosine(37) in tRNA + (sulfur carrier)-SH + AH2 + 2 S-adenosyl-L-methionine = 2-methylsulfanyl-N(6)-dimethylallyladenosine(37) in tRNA + (sulfur carrier)-H + 5'-deoxyadenosine + L-methionine + A + S-adenosyl-L-homocysteine + 2 H(+). Catalyzes the methylthiolation of N6-(dimethylallyl)adenosine (i(6)A), leading to the formation of 2-methylthio-N6-(dimethylallyl)adenosine (ms(2)i(6)A) at position 37 in tRNAs that read codons beginning with uridine. This chain is tRNA-2-methylthio-N(6)-dimethylallyladenosine synthase, found in Clostridium beijerinckii (strain ATCC 51743 / NCIMB 8052) (Clostridium acetobutylicum).